Here is a 115-residue protein sequence, read N- to C-terminus: Macrophage migration inhibitory factor (115 aa).

The active-site Proton acceptor; via imino nitrogen is the proline 2. Substrate-binding residues include lysine 33 and isoleucine 65. Residue lysine 78 is modified to N6-acetyllysine; alternate. Lysine 78 carries the post-translational modification N6-succinyllysine; alternate. Substrate is bound at residue asparagine 98.

It belongs to the MIF family. As to quaternary structure, homotrimer. Interacts with CD74 and CXCR2 extracellular domain and COPS5. Interacts with the USO1 and BNIPL.

The protein localises to the secreted. The protein resides in the cytoplasm. It catalyses the reaction 3-phenylpyruvate = enol-phenylpyruvate. It carries out the reaction L-dopachrome = 5,6-dihydroxyindole-2-carboxylate. In terms of biological role, pro-inflammatory cytokine involved in the innate immune response to bacterial pathogens. The expression of MIF at sites of inflammation suggests a role as mediator in regulating the function of macrophages in host defense. Counteracts the anti-inflammatory activity of glucocorticoids. Has phenylpyruvate tautomerase and dopachrome tautomerase activity (in vitro), but the physiological substrate is not known. It is not clear whether the tautomerase activity has any physiological relevance, and whether it is important for cytokine activity. The polypeptide is Macrophage migration inhibitory factor (Mus musculus (Mouse)).